The following is a 357-amino-acid chain: Glutamine synthetase root isozyme A (357 aa).

One can recognise a GS beta-grasp domain in the interval 19–99; it reads IIAEYIWVGG…VICDVYTPAG (81 aa). The 252-residue stretch at 106–357 folds into the GS catalytic domain; that stretch reads KRYNAAKIFS…AETTILWKKP (252 aa).

This sequence belongs to the glutamine synthetase family. In terms of assembly, homooctamer.

The protein localises to the cytoplasm. The enzyme catalyses L-glutamate + NH4(+) + ATP = L-glutamine + ADP + phosphate + H(+). The chain is Glutamine synthetase root isozyme A (GS3A) from Pisum sativum (Garden pea).